Consider the following 420-residue polypeptide: Protein-lysine N-trimethyltransferase SMYD5 (420 aa).

Positions 29–358 constitute an SET domain; that stretch reads AEARFISSAK…AGEEICISYL (330 aa). The segment at 104 to 142 adopts an MYND-type zinc-finger fold; it reads PEQCSIRKDLHQQCPRCQVTYCSAECRQAALEQYHQVLC. Tyr357 contributes to the S-adenosyl-L-methionine binding site. The interval 392-420 is disordered; sequence DDPDVTSDEEEEAEGETDDAELEDEMTDV.

It belongs to the class V-like SAM-binding methyltransferase superfamily.

It is found in the cytoplasm. The catalysed reaction is L-lysyl-[protein] + 3 S-adenosyl-L-methionine = N(6),N(6),N(6)-trimethyl-L-lysyl-[protein] + 3 S-adenosyl-L-homocysteine + 3 H(+). It catalyses the reaction L-lysyl(20)-[histone H4] + 3 S-adenosyl-L-methionine = N(6),N(6),N(6)-trimethyl-L-lysyl(20)-[histone H4] + 3 S-adenosyl-L-homocysteine + 3 H(+). The enzyme catalyses L-lysyl(36)-[histone H3] + 3 S-adenosyl-L-methionine = N(6),N(6),N(6)-trimethyl-L-lysyl(36)-[histone H3] + 3 S-adenosyl-L-homocysteine + 3 H(+). Functionally, protein-lysine N-trimethyltransferase that specifically catalyzes trimethylation of 'Lys-22' of the RPL40/eL40 subunit of the 60S ribosome, thereby promoting translation elongation and protein synthesis. May also act as a histone methyltransferase in the context of histone octamers, but not on nucleosome substrates: trimethylates 'Lys-36' of histone H3 and 'Lys-20' of histone H4 to form H3K36me3 and H4K20me3, respectively. The histone methyltransferase activity, which is independent of its SET domain, is however unsure in vivo. In Gallus gallus (Chicken), this protein is Protein-lysine N-trimethyltransferase SMYD5 (SMYD5).